We begin with the raw amino-acid sequence, 727 residues long: Glucans biosynthesis glucosyltransferase H (727 aa).

Residues 18 to 38 (SAMPNERPGAMEPQNLSKMPE) form a disordered region. Helical transmembrane passes span 58 to 78 (FLVV…MGAV), 97 to 117 (VNFC…LILL), 278 to 298 (LQQF…GWWV), 408 to 428 (IMAY…LMLA), 460 to 480 (LFYI…LLLL), 496 to 516 (IFSV…MMFI), and 572 to 592 (LLAW…ISAW).

The protein belongs to the glycosyltransferase 2 family. OpgH subfamily.

The protein resides in the cell inner membrane. It functions in the pathway glycan metabolism; osmoregulated periplasmic glucan (OPG) biosynthesis. In terms of biological role, involved in the biosynthesis of osmoregulated periplasmic glucans (OPGs). This Shewanella baltica (strain OS223) protein is Glucans biosynthesis glucosyltransferase H.